The following is a 379-amino-acid chain: Heme A synthase (379 aa).

Residues 1-28 (MAGSRSIFEEVQDSQKPAAMPGGVSRDR) are disordered. A run of 8 helical transmembrane segments spans residues 35 to 55 (VRVF…IGGL), 124 to 144 (FLGV…SVPV), 150 to 170 (LLLL…MVHS), 183 to 203 (RLAV…WYIL), 227 to 247 (ATGL…VAGI), 287 to 307 (FFHR…WIMA), 318 to 338 (AFDW…MTVM), and 341 to 361 (SPWY…TLIL). His-289 contributes to the heme binding site. His-349 lines the heme pocket.

This sequence belongs to the COX15/CtaA family. Type 2 subfamily. In terms of assembly, interacts with CtaB. Heme b is required as a cofactor.

It localises to the cell membrane. The enzyme catalyses Fe(II)-heme o + 2 A + H2O = Fe(II)-heme a + 2 AH2. It participates in porphyrin-containing compound metabolism; heme A biosynthesis; heme A from heme O: step 1/1. Functionally, catalyzes the conversion of heme O to heme A by two successive hydroxylations of the methyl group at C8. The first hydroxylation forms heme I, the second hydroxylation results in an unstable dihydroxymethyl group, which spontaneously dehydrates, resulting in the formyl group of heme A. This chain is Heme A synthase, found in Jannaschia sp. (strain CCS1).